Consider the following 283-residue polypeptide: MRDNLFIYLQYLLPHTLTSRLVSKLADSENKIIKNHLIRLAIKKFNINLVEAKETDISKYKSFNDFFIRELKDDLRPISNDKNVISSPADGVLSQFGTITDNSLIQAKGKLFSLESLIASSSTTSFTKFATIYLSPKDYHRVHMPIDGKLTKMVYIPGKLFSVNKITTSKVDNLFAKNERLICYFDTIIGEIAVIFVGALLVAGIETVWHGKIAPNYYKDIQTWDYNSAKFNIKFNKGDILGWFNFGSTVIILTSGNNVSFKFEENKNNIKIQVNQDLALITE.

Active-site charge relay system; for autoendoproteolytic cleavage activity residues include Asp90, His143, and Ser248. Residue Ser248 is the Schiff-base intermediate with substrate; via pyruvic acid; for decarboxylase activity of the active site. At Ser248 the chain carries Pyruvic acid (Ser); by autocatalysis.

Belongs to the phosphatidylserine decarboxylase family. PSD-B subfamily. Prokaryotic type I sub-subfamily. As to quaternary structure, heterodimer of a large membrane-associated beta subunit and a small pyruvoyl-containing alpha subunit. Pyruvate serves as cofactor. Post-translationally, is synthesized initially as an inactive proenzyme. Formation of the active enzyme involves a self-maturation process in which the active site pyruvoyl group is generated from an internal serine residue via an autocatalytic post-translational modification. Two non-identical subunits are generated from the proenzyme in this reaction, and the pyruvate is formed at the N-terminus of the alpha chain, which is derived from the carboxyl end of the proenzyme. The autoendoproteolytic cleavage occurs by a canonical serine protease mechanism, in which the side chain hydroxyl group of the serine supplies its oxygen atom to form the C-terminus of the beta chain, while the remainder of the serine residue undergoes an oxidative deamination to produce ammonia and the pyruvoyl prosthetic group on the alpha chain. During this reaction, the Ser that is part of the protease active site of the proenzyme becomes the pyruvoyl prosthetic group, which constitutes an essential element of the active site of the mature decarboxylase.

It is found in the cell membrane. It carries out the reaction a 1,2-diacyl-sn-glycero-3-phospho-L-serine + H(+) = a 1,2-diacyl-sn-glycero-3-phosphoethanolamine + CO2. Its pathway is phospholipid metabolism; phosphatidylethanolamine biosynthesis; phosphatidylethanolamine from CDP-diacylglycerol: step 2/2. Its function is as follows. Catalyzes the formation of phosphatidylethanolamine (PtdEtn) from phosphatidylserine (PtdSer). The protein is Phosphatidylserine decarboxylase proenzyme of Francisella tularensis subsp. mediasiatica (strain FSC147).